The sequence spans 508 residues: Probable G-protein coupled receptor 101 (508 aa).

At 1-35 (MTSTCTNSTRESNSSHTCMPLSKMPISLAHGIIRS) the chain is on the extracellular side. Asn7 and Asn13 each carry an N-linked (GlcNAc...) asparagine glycan. The chain crosses the membrane as a helical span at residues 36–56 (TVLVIFLAASFVGNIVLALVL). Over 57 to 68 (QRKPQLLQVTNR) the chain is Cytoplasmic. The helical transmembrane segment at 69–89 (FIFNLLVTDLLQISLVAPWVV) threads the bilayer. At 90-106 (ATSVPLFWPLNSHFCTA) the chain is on the extracellular side. Cysteines 104 and 182 form a disulfide. The helical transmembrane segment at 107-127 (LVSLTHLFAFASVNTIVVVSV) threads the bilayer. Residues 128-149 (DRYLSIIHPLSYPSKMTQRRGY) lie on the Cytoplasmic side of the membrane. A helical transmembrane segment spans residues 150-170 (LLLYGTWIVAILQSTPPLYGW). The Extracellular segment spans residues 171–196 (GQAAFDERNALCSMIWGASPSYTILS). A helical membrane pass occupies residues 197-217 (VVSFIVIPLIVMIACYSVVFC). Over 218–399 (AARRQHALLY…PRCYQCKAAK (182 aa)) the chain is Cytoplasmic. The disordered stretch occupies residues 244–338 (NEDEEGAEKK…ENSMKADKGR (95 aa)). Basic and acidic residues-rich tracts occupy residues 250–288 (AEKK…KAKE) and 318–338 (MEGK…DKGR). The helical transmembrane segment at 400–420 (VIFIIIFSYVLSLGPYCFLAV) threads the bilayer. Topologically, residues 421-433 (LAVWVDVETQVPQ) are extracellular. The helical transmembrane segment at 434 to 454 (WVITIIIWLFFLQCCIHPYVY) threads the bilayer. Topologically, residues 455–508 (GYMHKTIKKEIQDMLKKFFCKEKPPKEDSHPDLPGTEGGTEGKIVPSYDSATFP) are cytoplasmic. The segment covering 476–485 (EKPPKEDSHP) has biased composition (basic and acidic residues). The interval 476 to 508 (EKPPKEDSHPDLPGTEGGTEGKIVPSYDSATFP) is disordered.

It belongs to the G-protein coupled receptor 1 family.

The protein resides in the cell membrane. Its function is as follows. Orphan receptor. This chain is Probable G-protein coupled receptor 101 (GPR101), found in Homo sapiens (Human).